The sequence spans 725 residues: Homeobox-leucine zipper protein HDG3 (725 aa).

A disordered region spans residues 1-74 (MSQSNMVPVA…PRHKKKKYNR (74 aa)). Over residues 11-40 (NNGDNNNDNENNNNNNNNGGTDNTNAGNDS) the composition is skewed to low complexity. The span at 46–64 (DSGNTSSGNHGEGLGNNQA) shows a compositional bias: polar residues. A compositionally biased stretch (basic residues) spans 65–74 (PRHKKKKYNR). The homeobox DNA-binding region spans 68-127 (KKKKYNRHTQLQISEMEAFFRECPHPDDKQRYDLSAQLGLDPVQIKFWFQNKRTQNKNQQ). Positions 117–201 (QNKRTQNKNQ…SVTAEKISRL (85 aa)) form a coiled coil. Residues 243–475 (DANTKPIIME…LVRQCERISS (233 aa)) enclose the START domain.

It belongs to the HD-ZIP homeobox family. Class IV subfamily. In terms of assembly, interacts with AIL7/PLT7, ANT, BBM and AIL1. As to expression, expressed in siliques.

The protein resides in the nucleus. Probable transcription factor. Seems to promote cell differentiation. This chain is Homeobox-leucine zipper protein HDG3, found in Arabidopsis thaliana (Mouse-ear cress).